The sequence spans 241 residues: Fas-associated death domain protein (241 aa).

A death-inducing region spans residues 1–101; sequence MPGNHWYDIL…VNIYQEERLA (101 aa). In terms of domain architecture, Death spans 151-237; it reads RKRTAVFNKI…RNDIKRKVEQ (87 aa).

N-terminus interacts with Dredd. Interacts with imd.

The protein resides in the cytoplasm. Its function is as follows. Component of the IMD signaling pathway and is required for the host defense against Gram-negative bacteria. Interacts with Dredd, promotes cleavage of Dredd and is necessary and sufficient for enhancing Dredd-induced apoptosis. This chain is Fas-associated death domain protein (Fadd), found in Drosophila pseudoobscura pseudoobscura (Fruit fly).